The following is a 1253-amino-acid chain: Elongator complex protein 1 (1253 aa).

The tract at residues V830 to I1253 is mediates dimerization. Polar residues predominate over residues Y1126–K1141. The segment at Y1126–G1153 is disordered. The tract at residues R1137–K1155 is required for binding to tRNA. Basic residues predominate over residues N1142–G1153.

Belongs to the ELP1/IKA1 family. Homodimer. Component of the elongator complex.

The protein localises to the cytoplasm. The protein operates within tRNA modification; 5-methoxycarbonylmethyl-2-thiouridine-tRNA biosynthesis. Its function is as follows. Component of the elongator complex, a multiprotein complex which is required for multiple tRNA modifications, including mcm5U (5-methoxycarbonylmethyl uridine), mcm5s2U (5-methoxycarbonylmethyl-2-thiouridine), and ncm5U (5-carbamoylmethyl uridine). The elongator complex catalyzes formation of carboxymethyluridine in the wobble base at position 34 in tRNAs. ELP1 binds to tRNA, mediating interaction of the elongator complex with tRNA. The sequence is that of Elongator complex protein 1 from Schizosaccharomyces pombe (strain 972 / ATCC 24843) (Fission yeast).